Here is a 372-residue protein sequence, read N- to C-terminus: MAAPVPWACCAVLAAAAAVVYAQRHSPQEAPHVQYERLGSDVTLPCGTANWDAAVTWRVNGTDLALDLLNGSQLVLHGLELGHSGLYACFHRDSWHLRHQVLLHVGLPPREPVLSCRSNTYPKGFYCSWHLPTPTYIPNTFNVTVLHGSKIMVCEKDPALKNRCHIRYMHLFSTIKYKVSISVSNALGHNATAITFDEFTIVKPDPPENVVARPVPSNPRRLEVTWQTPSTWPDPESFPLKFFLRYRPLILDQWQHVELSDGTTHTITDAYAGKEYIIQVAAKDYEIGTWSDWSVAAHATPWTEEPRHLTTEAQAPETTTSTTSSLAPPPTTKICDPGELGSGGGPSAPFLIHVPVTLALAAAAATANSLLI.

Residues 1–22 (MAAPVPWACCAVLAAAAAVVYA) form the signal peptide. Residues 27–104 (PQEAPHVQYE…WHLRHQVLLH (78 aa)) enclose the Ig-like C2-type domain. C46 and C89 are oxidised to a cystine. 4 N-linked (GlcNAc...) asparagine glycosylation sites follow: N60, N70, N142, and N190. Fibronectin type-III domains are found at residues 108–205 (PPRE…VKPD) and 206–306 (PPEN…TEEP). The short motif at 290–294 (WSDWS) is the WSXWS motif element. Residues 301 to 340 (PWTEEPRHLTTEAQAPETTTSTTSSLAPPPTTKICDPGEL) form a disordered region. Residues 311 to 326 (TEAQAPETTTSTTSSL) are compositionally biased toward low complexity. Residue S342 is the site of GPI-anchor amidated serine attachment. Positions 343–372 (GGGPSAPFLIHVPVTLALAAAAATANSLLI) are cleaved as a propeptide — removed in mature form.

The protein belongs to the type I cytokine receptor family. Type 3 subfamily. Forms a heterotrimer with LIFR and IL6ST. Interacts with heterodimeric neurotropic cytokine composed of CLCF1/CLC and CRLF1/CLF-1. Either alone or in complex with the heterodimer CLCF1-CRLF1 interacts with SORL1; this interaction may promote internalization and lysosomal degradation. Expressed in retina, brain, spleen, lung, liver and kidney. In the retina it is highly expressed by photoreceptors, but also found in the RPE, inner nuclear layer and ganglion cells.

It localises to the cell membrane. Functionally, binds to CNTF. The alpha subunit provides the receptor specificity. The polypeptide is Ciliary neurotrophic factor receptor subunit alpha (CNTFR) (Canis lupus familiaris (Dog)).